Here is a 530-residue protein sequence, read N- to C-terminus: T-complex protein 1 subunit gamma (530 aa).

Belongs to the TCP-1 chaperonin family. Heterooligomeric complex of about 850 to 900 kDa that forms two stacked rings, 12 to 16 nm in diameter.

The protein localises to the cytoplasm. Functionally, molecular chaperone; assists the folding of proteins upon ATP hydrolysis. Known to play a role, in vitro, in the folding of actin and tubulin. The chain is T-complex protein 1 subunit gamma (cct3) from Dictyostelium discoideum (Social amoeba).